Consider the following 296-residue polypeptide: Release factor glutamine methyltransferase (296 aa).

Residues 133-137 (GTGSG), D156, and N201 each bind S-adenosyl-L-methionine. Substrate is bound at residue 201-204 (NPPY).

This sequence belongs to the protein N5-glutamine methyltransferase family. PrmC subfamily.

The enzyme catalyses L-glutaminyl-[peptide chain release factor] + S-adenosyl-L-methionine = N(5)-methyl-L-glutaminyl-[peptide chain release factor] + S-adenosyl-L-homocysteine + H(+). Functionally, methylates the class 1 translation termination release factors RF1/PrfA and RF2/PrfB on the glutamine residue of the universally conserved GGQ motif. This chain is Release factor glutamine methyltransferase, found in Rhodopirellula baltica (strain DSM 10527 / NCIMB 13988 / SH1).